The chain runs to 649 residues: MAEAPQVVETDPDFEPLPRQRSCTWPLPRPEFNQSNSTTSSPAPSGSTAANPDATASLASASAVSTDFMSNLSLLEESEDFARAPGCVAVAAAAAASRGLCGDFQGPEAGCVHSAPPQPPPTGPLSQPPPVPPAAAGPLAGQPRKTSSSRRNAWGNLSYADLITKAIESSAEKRLTLSQIYEWMVKSVPYFKDKGDSNSSAGWKNSIRHNLSLHSKFIRVQNEGTGKSSWWMLNPEGGKSGKSPRRRAASMDNNSKFAKSRGRAAKKKASLQSGQEGPGDSPGSQFSKWPASPGSHSNDDFDNWSTFRPRTSSNASTISGRLSPIMTEQDDLGDGDVHSLVYPPSAAKMASTLPSLSEISNPENMENLLDNLNLLSSPTSLTVSTQSSPGSMMQQTPCYSFAPPNTSLNSPSPNYAKYTYGQSSMSPVPQMPMQTLQDSKSSYGGLNQYNCAPGLLKELLTSDSPPHNDIMSPVDPGVAQPNSRVLGQNVLMGPNSVMPAYGSQAPHNKMMNPSSHTHPGHAQQTSSVNGRALPHVVNTMPHTSAMNRLTPVKTPLQVPLSHPMQMSALGNYSSVSSCNGYGRMGVLHQEKLPSDLDGMFIERLDCDMESIIRNDLMDGDTLDFNFDNVLPNQSFPHSVKTTTHSWVSG.

Disordered stretches follow at residues 1–62 and 112–151; these read MAEA…ASAS and VHSA…SSRR. Position 24 is a phosphothreonine; by PKB/AKT1 or PKB/AKT2 and SGK1 (T24). Over residues 33-62 the composition is skewed to low complexity; sequence NQSNSTTSSPAPSGSTAANPDATASLASAS. A compositionally biased stretch (pro residues) spans 116–135; that stretch reads PPQPPPTGPLSQPPPVPPAA. The segment at residues 154–248 is a DNA-binding region (fork-head); sequence WGNLSYADLI…KSGKSPRRRA (95 aa). 2 DNA-binding regions span residues 205 to 212 and 228 to 231; these read NSIRHNLS and SSWW. S206 carries the phosphoserine; by STK4/MST1 modification. 3 positions are modified to phosphoserine: S212, S228, and S229. The interval 228 to 339 is disordered; it reads SSWWMLNPEG…DDLGDGDVHS (112 aa). 2 positions are modified to N6-acetyllysine: K239 and K242. The residue at position 243 (S243) is a Phosphoserine; by CDK1. Residues R245 and R247 each carry the omega-N-methylarginine; by PRMT1 modification. The short motif at 245-247 is the Nuclear localization signal element; sequence RRR. S250 carries the phosphoserine; by PKB/AKT1 and SGK1 modification. K256, K259, and K268 each carry N6-acetyllysine. Basic residues predominate over residues 258–269; sequence AKSRGRAAKKKA. The interval 277-557 is sufficient for interaction with NLK; it reads GPGDSPGSQF…RLTPVKTPLQ (281 aa). Residues S281 and S292 each carry the phosphoserine modification. The segment covering 303–320 has biased composition (polar residues); sequence NWSTFRPRTSSNASTISG. At S313 the chain carries Phosphoserine; by PKB/AKT1. S316 is subject to Phosphoserine; by CK1 and SGK1. S319 bears the Phosphoserine; by CK1 mark. S323 is subject to Phosphoserine. Position 327 is a phosphothreonine (T327). The required for interaction with RUNX2 stretch occupies residues 357-453; that stretch reads SEISNPENME…GGLNQYNCAP (97 aa). N6-acetyllysine is present on K417. The short motif at 456 to 460 is the Required for interaction with SIRT1 element; sequence LKELL.

As to quaternary structure, interacts with LRPPRC. Interacts with RUNX2; the interaction inhibits RUNX2 transcriptional activity and mediates the IGF1/insulin-dependent BGLAP expression in osteoblasts Interacts with PPP2R1A; the interaction regulates the dephosphorylation of FOXO1 at Thr-24 and Ser-250 leading to its nuclear import. Interacts with NLK. Interacts with SIRT1; the interaction results in the deacetylation of FOXO1 leading to activation of FOXO1-mediated transcription of genes involved in DNA repair and stress resistance. Binds to CDK1. Interacts with the 14-3-3 proteins, YWHAG and YWHAZ; the interactions require insulin-stimulated phosphorylation on Thr-24, promote nuclear exit and loss of transcriptional activity. Interacts with SKP2; the interaction ubiquitinates FOXO1 leading to its proteasomal degradation. The interaction requires the presence of KRIT1. Interacts (via the C-terminal half) with ATF4 (via its DNA binding domain); the interaction occurs in osteoblasts, regulates glucose homeostasis via suppression of beta-cell proliferation and subsequent decrease in insulin production. Interacts with PRMT1; the interaction methylates FOXO1, prevents PKB/AKT1 phosphorylation and retains FOXO1 in the nucleus. Interacts with EP300 and CREBBP; the interactions acetylate FOXO1. Interacts with SIRT2; the interaction is disrupted in response to oxidative stress or serum deprivation, leading to increased level of acetylated FOXO1, which promotes stress-induced autophagy by stimulating E1-like activating enzyme ATG7. Interacts (acetylated form) with ATG7; the interaction is increased in response to oxidative stress or serum deprivation and promotes the autophagic process leading to cell death. Interacts (acetylated form) with PPARG. Interacts with XBP1; this interaction is direct and leads to FOXO1 ubiquitination and degradation via the proteasome pathway. Interacts (via the Fork-head domain) with CEBPA; the interaction increases when FOXO1 is deacetylated. Interacts with WDFY2. Forms a complex with WDFY2 and AKT1. Interacts with CRY1. Interacts with PPIA/CYPA; the interaction promotes FOXO1 dephosphorylation, nuclear accumulation and transcriptional activity. Interacts with TOX4; FOXO1 is required for full induction of TOX4-dependent activity and the interaction is inhibited by insulin. Interacts (when phosphorylated on Ser-250) with STUB1/CHIP. In terms of processing, phosphorylation by NLK promotes nuclear export and inhibits the transcriptional activity. In response to growth factors, phosphorylation on Thr-24, Ser-250 and Ser-313 by PKB/AKT1 promotes nuclear export and inactivation of transactivational activity. Phosphorylation on Thr-24 is required for binding 14-3-3 proteins. Phosphorylation of Ser-250 decreases DNA-binding activity and promotes the phosphorylation of Thr-24 and Ser-313, permitting phosphorylation of Ser-316 and Ser-319, probably by CDK1, leading to nuclear exclusion and loss of function. Stress signals, such as response to oxygen or nitric oxide, attenuate the PKB/AKT1-mediated phosphorylation leading to nuclear retention. Phosphorylation of Ser-323 is independent of IGF1 and leads to reduced function. Dephosphorylated on Thr-24 and Ser-250 by PP2A in beta-cells under oxidative stress leading to nuclear retention. Phosphorylation of Ser-243 by CDK1 disrupts binding of 14-3-3 proteins leading to nuclear accumulation and has no effect on DNA binding nor transcriptional activity. Phosphorylation by STK4/MST1 on Ser-206, upon oxidative stress, inhibits binding to 14-3-3 proteins and nuclear export. PPIA/CYPA promotes its dephosphorylation on Ser-250. Post-translationally, ubiquitinated by SKP2. Ubiquitination leads to proteasomal degradation. Ubiquitinated by STUB1/CHIP; when Ser-250 is phosphorylated. Methylation inhibits AKT1-mediated phosphorylation at Ser-250 and is increased by oxidative stress. In terms of processing, acetylated. Acetylation at Lys-256 and Lys-268 are necessary for autophagic cell death induction. Deacetylated by SIRT2 in response to oxidative stress or serum deprivation, thereby negatively regulating FOXO1-mediated autophagic cell death. Once in the nucleus, acetylated by CREBBP/EP300. Acetylation diminishes the interaction with target DNA and attenuates the transcriptional activity. It increases the phosphorylation at Ser-250. Deacetylation by SIRT1 results in reactivation of the transcriptional activity. Oxidative stress by hydrogen peroxide treatment appears to promote deacetylation and uncoupling of insulin-induced phosphorylation. By contrast, resveratrol acts independently of acetylation. Acetylated at Lys-417, promoting its localization to the nucleus and transcription factor activity. Deacetylation at Lys-417 by SIRT6, promotes its translocation into the cytoplasm, preventing its transcription factor activity. Deacetylation and subsequent inhibition by SIRT6 has different effects depending on cell types: it inhibits gluconeogenesis in hepatocytes, promotes glucose sensing in pancreatic beta-cells and regulates lipid catabolism in brown adipocytes. As to expression, expressed in the internal elastic lamina of the carotid artery (at protein level).

The protein localises to the cytoplasm. It localises to the nucleus. Transcription factor that is the main target of insulin signaling and regulates metabolic homeostasis in response to oxidative stress. Binds to the insulin response element (IRE) with consensus sequence 5'-TT[G/A]TTTTG-3' and the related Daf-16 family binding element (DBE) with consensus sequence 5'-TT[G/A]TTTAC-3'. Activity suppressed by insulin. Main regulator of redox balance and osteoblast numbers and controls bone mass. Orchestrates the endocrine function of the skeleton in regulating glucose metabolism. Also acts as a key regulator of chondrogenic commitment of skeletal progenitor cells in response to lipid availability: when lipids levels are low, translocates to the nucleus and promotes expression of SOX9, which induces chondrogenic commitment and suppresses fatty acid oxidation. Acts synergistically with ATF4 to suppress osteocalcin/BGLAP activity, increasing glucose levels and triggering glucose intolerance and insulin insensitivity. Also suppresses the transcriptional activity of RUNX2, an upstream activator of osteocalcin/BGLAP. Acts as an inhibitor of glucose sensing in pancreatic beta cells by acting as a transcription repressor and suppressing expression of PDX1. In hepatocytes, promotes gluconeogenesis by acting together with PPARGC1A and CEBPA to activate the expression of genes such as IGFBP1, G6PC1 and PCK1. Also promotes gluconeogenesis by directly promoting expression of PPARGC1A and G6PC1. Important regulator of cell death acting downstream of CDK1, PKB/AKT1 and STK4/MST1. Promotes neural cell death. Mediates insulin action on adipose tissue. Regulates the expression of adipogenic genes such as PPARG during preadipocyte differentiation and, adipocyte size and adipose tissue-specific gene expression in response to excessive calorie intake. Regulates the transcriptional activity of GADD45A and repair of nitric oxide-damaged DNA in beta-cells. Required for the autophagic cell death induction in response to starvation or oxidative stress in a transcription-independent manner. Mediates the function of MLIP in cardiomyocytes hypertrophy and cardiac remodeling. Positive regulator of apoptosis in cardiac smooth muscle cells as a result of its transcriptional activation of pro-apoptotic genes. Regulates endothelial cell (EC) viability and apoptosis in a PPIA/CYPA-dependent manner via transcription of CCL2 and BCL2L11 which are involved in EC chemotaxis and apoptosis. The protein is Forkhead box protein O1 (Foxo1) of Rattus norvegicus (Rat).